Reading from the N-terminus, the 1719-residue chain is 5'-3' exoribonuclease 1 (1719 aa).

A compositionally biased stretch (basic and acidic residues) spans H1268–K1298. The segment at H1268–R1317 is disordered. Positions C1301–G1314 are enriched in polar residues. S1382 carries the phosphoserine modification. Residues I1397 to V1430 are compositionally biased toward basic and acidic residues. Disordered regions lie at residues I1397 to G1445 and E1634 to E1719. The segment covering A1638 to T1660 has biased composition (polar residues). Over residues P1661–S1680 the composition is skewed to low complexity. Over residues H1681–V1690 the composition is skewed to polar residues.

Belongs to the 5'-3' exonuclease family. As to quaternary structure, found in a mRNP complex with UPF1, UPF2, UPF3B and XRN1. Associates with alpha and beta tubulins. Interacts with DIS3L2. Interacts with ZC3HAV1 in an RNA-dependent manner. Interacts with ZFP36L1. Interacts with TRIM71 (via NHL repeats) in an RNA-dependent manner. Interacts with YTHDC2 (via ANK repeats). Interacts with DHX34; the interaction is RNA-independent. In terms of tissue distribution, expressed in heart, brain (spinal cord, dorsal root and superior cervical ganglia, neurons of the cerebrum and brain stem), peripheral nerve fibers in the skin and intestine, spleen, lung, liver, skeletal muscle, kidney and testis.

The protein resides in the cytoplasm. Its function is as follows. Major 5'-3' exoribonuclease involved in mRNA decay. Required for the 5'-3'-processing of the G4 tetraplex-containing DNA and RNA substrates. The kinetic of hydrolysis is faster for G4 RNA tetraplex than for G4 DNA tetraplex and monomeric RNA tetraplex. Binds to RNA and DNA. Plays a role in replication-dependent histone mRNA degradation. This is 5'-3' exoribonuclease 1 from Mus musculus (Mouse).